The primary structure comprises 1545 residues: ATP-binding cassette sub-family C member 2 (1545 aa).

At 1–27 (MLEKFCNSTFWNSSFLDSPEADLPLCF) the chain is on the extracellular side. N-linked (GlcNAc...) asparagine glycosylation is found at asparagine 7 and asparagine 12. The chain crosses the membrane as a helical span at residues 28 to 48 (EQTVLVWIPLGYLWLLAPWQL). At 49 to 68 (LHVYKSRTKRSSTTKLYLAK) the chain is on the cytoplasmic side. The helical transmembrane segment at 69–89 (QVFVGFLLILAAIELALVLTE) threads the bilayer. Over 90-93 (DSGQ) the chain is Extracellular. Residues 94–114 (ATVPAVRYTNPSLYLGTWLLV) form a helical membrane-spanning segment. At 115–126 (LLIQYSRQWCVQ) the chain is on the cytoplasmic side. The helical transmembrane segment at 127-147 (KNSWFLSLFWILSILCGTFQF) threads the bilayer. Residues 148-165 (QTLIRTLLQGDNSNLAYS) are Extracellular-facing. The helical transmembrane segment at 166-186 (CLFFISYGFQILILIFSAFSE) threads the bilayer. The Cytoplasmic segment spans residues 187–313 (NNESSNNPSS…DVPKSWLMKA (127 aa)). The tract at residues 253-284 (ARRALQRRQEKSSQQNSGARLPGLNKNQSQSQ) is disordered. Phosphoserine is present on residues serine 281 and serine 283. The chain crosses the membrane as a helical span at residues 314-334 (LFKTFYMVLLKSFLLKLVNDI). Residues 322 to 605 (LLKSFLLKLV…LPMMISSMLQ (284 aa)) form the ABC transmembrane type-1 1 domain. At 335–360 (FTFVSPQLLKLLISFASDRDTYLWIG) the chain is on the extracellular side. A helical membrane pass occupies residues 361 to 381 (YLCAILLFTAALIQSFCLQCY). Residues 382–437 (FQLCFKLGVKVRTAIMASVYKKALTLSNLARKEYTVGETVNLMSVDAQKLMDVTNF) lie on the Cytoplasmic side of the membrane. A helical membrane pass occupies residues 438–458 (MHMLWSSVLQIVLSIFFLWRE). Residues 459 to 461 (LGP) are Extracellular-facing. The chain crosses the membrane as a helical span at residues 462–482 (SVLAGVGVMVLVIPINAILST). Residues 483-544 (KSKTIQVKNM…NLLAFSQLQC (62 aa)) are Cytoplasmic-facing. Residues 545 to 565 (VVIFVFQLTPVLVSVVTFSVY) form a helical membrane-spanning segment. Residues 566–587 (VLVDSNNILDAQKAFTSITLFN) are Extracellular-facing. The helical transmembrane segment at 588 to 608 (ILRFPLSMLPMMISSMLQASV) threads the bilayer. The Cytoplasmic segment spans residues 609 to 971 (STERLEKYLG…VKFSIYLEYL (363 aa)). The 225-residue stretch at 637-861 (MQFSEASFTW…KGEFAKNLKT (225 aa)) folds into the ABC transporter 1 domain. Residue 671-678 (GPVGSGKS) participates in ATP binding. Serine 878, serine 926, serine 930, and serine 938 each carry phosphoserine. Residues 972-992 (QAIGLFSIFFIILAFVMNSVA) form a helical membrane-spanning segment. Positions 979–1264 (IFFIILAFVM…LVRMTSEIET (286 aa)) constitute an ABC transmembrane type-1 2 domain. The Extracellular segment spans residues 993–1033 (FIGSNLWLSAWTSDSKIFNSTDYPASQRDMRVGVYGALGLA). Asparagine 1011 is a glycosylation site (N-linked (GlcNAc...) asparagine). A helical membrane pass occupies residues 1034 to 1054 (QGIFVFIAHFWSAFGFVHASN). Over 1055 to 1097 (ILHKQLLNNILRAPMRFFDTTPTGRIVNRFAGDISTVDDTLPQ) the chain is Cytoplasmic. Residues 1098 to 1118 (SLRSWITCFLGIISTLVMICM) form a helical membrane-spanning segment. Residue alanine 1119 is a topological domain, extracellular. The chain crosses the membrane as a helical span at residues 1120–1140 (TPVFTIIVIPLGIIYVSVQMF). Topologically, residues 1141–1211 (YVSTSRQLRR…TSNRWLAIRL (71 aa)) are cytoplasmic. A helical transmembrane segment spans residues 1212–1232 (ELVGNLTVFFSALMMVIYRDT). Topologically, residues 1233–1234 (LS) are extracellular. The chain crosses the membrane as a helical span at residues 1235–1255 (GDTVGFVLSNALNITQTLNWL). Topologically, residues 1256-1545 (VRMTSEIETN…GIENVNSTKF (290 aa)) are cytoplasmic. Positions 1300-1534 (IQFNNYQVRY…PGPFYFMAKE (235 aa)) constitute an ABC transporter 2 domain. 1334-1341 (GRTGAGKS) serves as a coordination point for ATP. Serine 1438 is modified (phosphoserine).

This sequence belongs to the ABC transporter superfamily. ABCC family. Conjugate transporter (TC 3.A.1.208) subfamily. Expressed by polarized cells in liver, kidney and intestine. The highest expression is found in liver. Expressed in small intestine.

The protein resides in the apical cell membrane. The catalysed reaction is ATP + H2O + xenobioticSide 1 = ADP + phosphate + xenobioticSide 2.. It catalyses the reaction an S-substituted glutathione(in) + ATP + H2O = an S-substituted glutathione(out) + ADP + phosphate + H(+). It carries out the reaction taurolithocholate 3-sulfate(in) + ATP + H2O = taurolithocholate 3-sulfate(out) + ADP + phosphate + H(+). The enzyme catalyses leukotriene C4(in) + ATP + H2O = leukotriene C4(out) + ADP + phosphate + H(+). The catalysed reaction is 17beta-estradiol 17-O-(beta-D-glucuronate)(in) + ATP + H2O = 17beta-estradiol 17-O-(beta-D-glucuronate)(out) + ADP + phosphate + H(+). It catalyses the reaction (4Z,15Z)-bilirubin IXalpha C8-beta-D-glucuronoside(in) + ATP + H2O = (4Z,15Z)-bilirubin IXalpha C8-beta-D-glucuronoside(out) + ADP + phosphate + H(+). It carries out the reaction (4Z,15Z)-bilirubin IXalpha C8,C12-beta-D-bisglucuronoside(in) + ATP + H2O = (4Z,15Z)-bilirubin IXalpha C8,C12-beta-D-bisglucuronoside(out) + ADP + phosphate + H(+). Its function is as follows. ATP-dependent transporter of the ATP-binding cassette (ABC) family that binds and hydrolyzes ATP to enable active transport of various substrates including many drugs, toxicants and endogenous compound across cell membranes. Transports a wide variety of conjugated organic anions such as sulfate-, glucuronide- and glutathione (GSH)-conjugates of endo- and xenobiotics substrates. Mediates hepatobiliary excretion of mono- and bis-glucuronidated bilirubin molecules and therefore play an important role in bilirubin detoxification. Also mediates hepatobiliary excretion of others glucuronide conjugates such as 17beta-estradiol 17-glucosiduronic acid and leukotriene C4. Transports sulfated bile salt such as taurolithocholate sulfate. Transports various anticancer drugs, such as anthracycline, vinca alkaloid and methotrexate and HIV-drugs such as protease inhibitors. Confers resistance to several anti-cancer drugs including cisplatin, doxorubicin, epirubicin, methotrexate, etoposide and vincristine. This Homo sapiens (Human) protein is ATP-binding cassette sub-family C member 2.